The following is a 407-amino-acid chain: Tryptophan synthase beta chain (407 aa).

The span at 1-11 (MSTAPSQQHAS) shows a compositional bias: polar residues. The segment at 1 to 25 (MSTAPSQQHASAQVPDPRGRFGDFG) is disordered. Lys100 is modified (N6-(pyridoxal phosphate)lysine).

Belongs to the TrpB family. In terms of assembly, tetramer of two alpha and two beta chains. Requires pyridoxal 5'-phosphate as cofactor.

The enzyme catalyses (1S,2R)-1-C-(indol-3-yl)glycerol 3-phosphate + L-serine = D-glyceraldehyde 3-phosphate + L-tryptophan + H2O. Its pathway is amino-acid biosynthesis; L-tryptophan biosynthesis; L-tryptophan from chorismate: step 5/5. The beta subunit is responsible for the synthesis of L-tryptophan from indole and L-serine. This chain is Tryptophan synthase beta chain, found in Rhodopirellula baltica (strain DSM 10527 / NCIMB 13988 / SH1).